The chain runs to 413 residues: Aspartate aminotransferase, cytoplasmic (413 aa).

The L-aspartate site is built by G39, W141, and N195. K259 carries the N6-(pyridoxal phosphate)lysine modification. R387 serves as a coordination point for L-aspartate.

It belongs to the class-I pyridoxal-phosphate-dependent aminotransferase family. Homodimer. Pyridoxal 5'-phosphate serves as cofactor.

Its subcellular location is the cytoplasm. The catalysed reaction is L-aspartate + 2-oxoglutarate = oxaloacetate + L-glutamate. The enzyme catalyses L-cysteine + 2-oxoglutarate = 2-oxo-3-sulfanylpropanoate + L-glutamate. It carries out the reaction (2S)-2-aminobutanoate + 2-oxoglutarate = 2-oxobutanoate + L-glutamate. It catalyses the reaction 3-sulfino-L-alanine + 2-oxoglutarate = 3-sulfinopyruvate + L-glutamate. Functionally, biosynthesis of L-glutamate from L-aspartate or L-cysteine. Important regulator of levels of glutamate, the major excitatory neurotransmitter of the vertebrate central nervous system. Acts as a scavenger of glutamate in brain neuroprotection. The aspartate aminotransferase activity is involved in hepatic glucose synthesis during development and in adipocyte glyceroneogenesis. Using L-cysteine as substrate, regulates levels of mercaptopyruvate, an important source of hydrogen sulfide. Mercaptopyruvate is converted into H(2)S via the action of 3-mercaptopyruvate sulfurtransferase (3MST). Hydrogen sulfide is an important synaptic modulator and neuroprotectant in the brain. This Sus scrofa (Pig) protein is Aspartate aminotransferase, cytoplasmic.